The sequence spans 180 residues: Centromere protein M (180 aa).

Component of the CENPA-NAC complex, at least composed of CENPA, CENPC, CENPH, CENPM, CENPN, CENPT and CENPU. The CENPA-NAC complex interacts with the CENPA-CAD complex, composed of CENPI, CENPK, CENPL, CENPO, CENPP, CENPQ, CENPR and CENPS. Isoform 3 is highly expressed in spleen, and intermediately in heart, prostate and ovary. Isoform 3 is highly expressed in resting CD19 B-cells and B-lineage chronic lymphocytic leukemia (B-CLL) cells and weakly expressed in activated B-cells. Isoform 1 is selectively expressed in activated CD19 cells and weakly in resting CD19 B-cells.

The protein localises to the nucleus. It is found in the cytoplasm. Its subcellular location is the chromosome. It localises to the centromere. The protein resides in the kinetochore. In terms of biological role, component of the CENPA-NAC (nucleosome-associated) complex, a complex that plays a central role in assembly of kinetochore proteins, mitotic progression and chromosome segregation. The CENPA-NAC complex recruits the CENPA-CAD (nucleosome distal) complex and may be involved in incorporation of newly synthesized CENPA into centromeres. The protein is Centromere protein M (CENPM) of Homo sapiens (Human).